The sequence spans 470 residues: Chromosomal replication initiator protein DnaA (470 aa).

The tract at residues 1–68 (MENFWSLCLG…SALAEEVLST (68 aa)) is domain I, interacts with DnaA modulators. The interval 68–133 (TPVQIELALY…KKPKTLTETS (66 aa)) is domain II. The interval 134–350 (GLNPAFRFDN…GALNRIIAMA (217 aa)) is domain III, AAA+ region. Positions 178, 180, 181, and 182 each coordinate ATP. Residues 351–470 (NFTGHAIDVS…IAVLIQVIRD (120 aa)) form a domain IV, binds dsDNA region.

Belongs to the DnaA family. As to quaternary structure, oligomerizes as a right-handed, spiral filament on DNA at oriC.

Its subcellular location is the cytoplasm. Its function is as follows. Plays an essential role in the initiation and regulation of chromosomal replication. ATP-DnaA binds to the origin of replication (oriC) to initiate formation of the DNA replication initiation complex once per cell cycle. Binds the DnaA box (a 9 base pair repeat at the origin) and separates the double-stranded (ds)DNA. Forms a right-handed helical filament on oriC DNA; dsDNA binds to the exterior of the filament while single-stranded (ss)DNA is stabiized in the filament's interior. The ATP-DnaA-oriC complex binds and stabilizes one strand of the AT-rich DNA unwinding element (DUE), permitting loading of DNA polymerase. After initiation quickly degrades to an ADP-DnaA complex that is not apt for DNA replication. Binds acidic phospholipids. The polypeptide is Chromosomal replication initiator protein DnaA (Methylobacillus flagellatus (strain ATCC 51484 / DSM 6875 / VKM B-1610 / KT)).